The sequence spans 718 residues: SANT and BTB domain regulator of class switch recombination (718 aa).

The SANT domain occupies 21–59 (DMILYPLIGIPQTINWETIARLVPGLTPKECAKRFDELK). Polar residues predominate over residues 118–134 (ASTRNCSSESENCTTHN). The disordered stretch occupies residues 118-142 (ASTRNCSSESENCTTHNGGEMTEES). A BTB domain is found at 147–255 (MVIHVCDEAK…QCIQYCHKNM (109 aa)). Over residues 555-576 (SEEEEYTTGSEVTEDEVGDEEE) the composition is skewed to acidic residues. 2 disordered regions span residues 555 to 622 (SEEE…SPFV) and 692 to 718 (SVPVSARQSSSEKNTRSKSRFGQGRPA). A compositionally biased stretch (basic residues) spans 580–595 (KQRKKEKPKKFTRQPK). Residues 604-615 (QRKEKALEKSAS) show a composition bias toward basic and acidic residues.

It belongs to the KIAA1841 family. Homodimer. Interacts (via the BTB domain) with HDAC1 and NCOR2.

In terms of biological role, negatively regulates class switch recombination or isotype switching in splenic B-cells. This Homo sapiens (Human) protein is SANT and BTB domain regulator of class switch recombination.